The chain runs to 368 residues: sn-1 linoleoyl-lipid 6-desaturase (368 aa).

A run of 2 helical transmembrane segments spans residues 47 to 67 (IILAWVVSAWTFVVFGPDVLW) and 68 to 88 (MKLLGCIVLGFGVSAVGFNIS). The short motif at 89–93 (HDGNH) is the Histidine box-1 element. The short motif at 124-129 (HNVLHH) is the Histidine box-2 element. 3 helical membrane passes run 164-184 (WFIWFVYPFIPYYWSIADVQT), 204-224 (IATLLAFKAFGVAVFLIIPIA), and 233-253 (VIGASIVYMTHGLVACVVFML). The Histidine box-3 motif lies at 305-309 (HHLFP).

It belongs to the fatty acid desaturase type 2 family. It depends on Fe(2+) as a cofactor.

The protein resides in the cell inner membrane. The protein localises to the cellular thylakoid membrane. It catalyses the reaction a 1-[(9Z,12Z)-octadecdienoyl]-2-acyl-glycerolipid + 2 reduced [2Fe-2S]-[ferredoxin] + O2 + 2 H(+) = a 1-[(6Z,9Z,12Z)-octadectrienoyl]-2-acyl-glycerolipid + 2 oxidized [2Fe-2S]-[ferredoxin] + 2 H2O. The protein operates within lipid metabolism; polyunsaturated fatty acid biosynthesis. Its activity is regulated as follows. Activity requires ferredoxin, which is the natural electron donor, or cytochrome b5. In addition, activity is increased in the presence of the intermediate electron donors, NADPH and FADH(2). In terms of biological role, desaturase involved in fatty acid biosynthesis. Introduces a double bond at carbon 6 of linoleoyl group (18:2) attached to the sn-1 position of the glycerol moiety of membrane glycerolipids, leading to the formation of gamma-linolenic acid (GLA). The sequence is that of sn-1 linoleoyl-lipid 6-desaturase from Arthrospira platensis (Spirulina platensis).